The primary structure comprises 213 residues: Histone H1.2 (213 aa).

A compositionally biased stretch (low complexity) spans 1 to 17; it reads MSETAPAAPAAAPPAEK. The interval 1-41 is disordered; that stretch reads MSETAPAAPAAAPPAEKTPVKKKAAKKPAGARRKASGPPVS. Position 2 is an N-acetylserine; partial (S2). Residue S2 is modified to Phosphoserine. Residue K17 is modified to N6-acetyllysine. Residues 20-35 show a composition bias toward basic residues; the sequence is VKKKAAKKPAGARRKA. Residues K23, K26, and K27 each carry the N6-(2-hydroxyisobutyryl)lysine modification. N6-(beta-hydroxybutyryl)lysine; alternate is present on K34. K34 carries the post-translational modification N6-crotonyllysine; alternate. Residue K34 is modified to N6-methyllysine; alternate. One can recognise an H15 domain in the interval 36 to 109; that stretch reads SGPPVSELIT…GASGSFKLNK (74 aa). Position 46 is an N6-(2-hydroxyisobutyryl)lysine (K46). K52 is modified (N6-(beta-hydroxybutyryl)lysine; alternate). K52 carries the post-translational modification N6-(2-hydroxyisobutyryl)lysine; alternate. Position 54 is a citrulline (R54). At K63 the chain carries N6-(2-hydroxyisobutyryl)lysine. K64 carries the N6-(beta-hydroxybutyryl)lysine; alternate modification. N6-crotonyllysine; alternate is present on K64. Residue K64 is modified to N6-(2-hydroxyisobutyryl)lysine; alternate. K75 and K81 each carry N6-(2-hydroxyisobutyryl)lysine. An N6-(beta-hydroxybutyryl)lysine; alternate mark is found at K85 and K90. 3 positions are modified to N6-crotonyllysine; alternate: K85, K90, and K97. An N6-(2-hydroxyisobutyryl)lysine; alternate mark is found at K85, K90, and K97. The segment at 95 to 213 is disordered; the sequence is QTKGTGASGS…KPKKAAPKKK (119 aa). K97 bears the N6-succinyllysine; alternate mark. At S104 the chain carries Phosphoserine; by PKC. K106 bears the N6-(beta-hydroxybutyryl)lysine mark. 5 positions are modified to N6-(2-hydroxyisobutyryl)lysine: K110, K117, K121, K129, and K136. The span at 119–140 shows a compositional bias: basic residues; that stretch reads KAKKAGAAKPKKAAGAAKKTKK. At T146 the chain carries Phosphothreonine. K148 carries the N6-(2-hydroxyisobutyryl)lysine modification. Positions 149–160 are enriched in basic residues; it reads KTAKKTPKKAKK. 2 positions are modified to N6-crotonyllysine; alternate: K159 and K168. 2 positions are modified to N6-(2-hydroxyisobutyryl)lysine; alternate: K159 and K168. Positions 169 to 186 are enriched in basic residues; that stretch reads KVAKSPKKAKAAKPKKAA. K187 carries the post-translational modification N6-methyllysine; by EHMT1 and EHMT2. S188 bears the ADP-ribosylserine mark. Residues 193–213 are compositionally biased toward basic residues; that stretch reads VKPKAAKPKVAKPKKAAPKKK.

The protein belongs to the histone H1/H5 family. Post-translationally, H1 histones are progressively phosphorylated during the cell cycle, becoming maximally phosphorylated during late G2 phase and M phase, and being dephosphorylated sharply thereafter. Crotonylation (Kcr) is specifically present in male germ cells and marks testis-specific genes in post-meiotic cells, including X-linked genes that escape sex chromosome inactivation in haploid cells. Crotonylation marks active promoters and enhancers and confers resistance to transcriptional repressors. It is also associated with post-meiotically activated genes on autosomes. In terms of processing, ADP-ribosylated on Ser-188 in response to DNA damage. Post-translationally, citrullination at Arg-54 (H1R54ci) by PADI4 takes place within the DNA-binding site of H1 and results in its displacement from chromatin and global chromatin decondensation, thereby promoting pluripotency and stem cell maintenance.

The protein localises to the nucleus. It localises to the chromosome. Its function is as follows. Histone H1 protein binds to linker DNA between nucleosomes forming the macromolecular structure known as the chromatin fiber. Histones H1 are necessary for the condensation of nucleosome chains into higher-order structured fibers. Also acts as a regulator of individual gene transcription through chromatin remodeling, nucleosome spacing and DNA methylation. This Bos taurus (Bovine) protein is Histone H1.2.